Here is an 84-residue protein sequence, read N- to C-terminus: Venom protein SynTx (84 aa).

The first 19 residues, 1–19, serve as a signal peptide directing secretion; that stretch reads TLLLTLVVVTIVCLDLGYT. 4 disulfides stabilise this stretch: cysteine 22-cysteine 43, cysteine 36-cysteine 61, cysteine 65-cysteine 76, and cysteine 77-cysteine 82.

Belongs to the three-finger toxin family. Short-chain subfamily. Aminergic toxin sub-subfamily. In terms of assembly, homodimer; disulfide-linked. In terms of tissue distribution, expressed by the venom gland.

It localises to the secreted. Functionally, this protein shows a synergetic toxic effect in that it enhances the toxicity of other toxins. The protein is Venom protein SynTx of Dendroaspis jamesoni jamesoni (Jameson's mamba).